A 282-amino-acid polypeptide reads, in one-letter code: Fused uL13/uS9 ribosomal subunit protein (282 aa).

The large ribosomal subunit protein uL13 stretch occupies residues 1 to 141; the sequence is MLLMIINGEG…LGEISELLGA (141 aa). Residues 150 to 282 are small ribosomal subunit protein uS9; that stretch reads MKKVIHTSGK…ARARRQKSYR (133 aa). The disordered stretch occupies residues 259 to 282; it reads DPRRSEPKKYGGRGARARRQKSYR. Positions 273–282 are enriched in basic residues; it reads ARARRQKSYR.

In the N-terminal section; belongs to the universal ribosomal protein uL13 family. The protein in the C-terminal section; belongs to the universal ribosomal protein uS9 family. In terms of assembly, L13 is part of the 50S ribosomal subunit. S9 is part of the 30S ribosomal subunit.

Functionally, L13 protein is one of the early assembly proteins of the 50S ribosomal subunit, although it is not seen to bind rRNA by itself. It is important during the early stages of 50S assembly. This chain is Fused uL13/uS9 ribosomal subunit protein (rpl13/rps9), found in Methanothermobacter thermautotrophicus (strain ATCC 29096 / DSM 1053 / JCM 10044 / NBRC 100330 / Delta H) (Methanobacterium thermoautotrophicum).